The following is an 858-amino-acid chain: Bifunctional uridylyltransferase/uridylyl-removing enzyme (858 aa).

The segment at 1–324 (MSASVAEPPP…PATSGVTRVL (324 aa)) is uridylyltransferase. Positions 325–681 (SPGRFVEKQG…ARPSPVGDAL (357 aa)) are uridylyl-removing. The 123-residue stretch at 443–565 (VDQHILMVLR…VGSERRLTAL (123 aa)) folds into the HD domain. 2 consecutive ACT domains span residues 682-761 (QVLV…PEPS) and 790-858 (ILSV…AIAV).

Belongs to the GlnD family. The cofactor is Mg(2+).

It catalyses the reaction [protein-PII]-L-tyrosine + UTP = [protein-PII]-uridylyl-L-tyrosine + diphosphate. The enzyme catalyses [protein-PII]-uridylyl-L-tyrosine + H2O = [protein-PII]-L-tyrosine + UMP + H(+). Uridylyltransferase (UTase) activity is inhibited by glutamine, while glutamine activates uridylyl-removing (UR) activity. Its function is as follows. Modifies, by uridylylation and deuridylylation, the PII regulatory proteins (GlnB and homologs), in response to the nitrogen status of the cell that GlnD senses through the glutamine level. Under low glutamine levels, catalyzes the conversion of the PII proteins and UTP to PII-UMP and PPi, while under higher glutamine levels, GlnD hydrolyzes PII-UMP to PII and UMP (deuridylylation). Thus, controls uridylylation state and activity of the PII proteins, and plays an important role in the regulation of nitrogen assimilation and metabolism. This is Bifunctional uridylyltransferase/uridylyl-removing enzyme from Burkholderia pseudomallei (strain 1106a).